The primary structure comprises 224 residues: ATP phosphoribosyltransferase (224 aa).

It belongs to the ATP phosphoribosyltransferase family. Short subfamily. In terms of assembly, heteromultimer composed of HisG and HisZ subunits.

It is found in the cytoplasm. It carries out the reaction 1-(5-phospho-beta-D-ribosyl)-ATP + diphosphate = 5-phospho-alpha-D-ribose 1-diphosphate + ATP. It participates in amino-acid biosynthesis; L-histidine biosynthesis; L-histidine from 5-phospho-alpha-D-ribose 1-diphosphate: step 1/9. In terms of biological role, catalyzes the condensation of ATP and 5-phosphoribose 1-diphosphate to form N'-(5'-phosphoribosyl)-ATP (PR-ATP). Has a crucial role in the pathway because the rate of histidine biosynthesis seems to be controlled primarily by regulation of HisG enzymatic activity. The sequence is that of ATP phosphoribosyltransferase from Cupriavidus pinatubonensis (strain JMP 134 / LMG 1197) (Cupriavidus necator (strain JMP 134)).